A 101-amino-acid polypeptide reads, in one-letter code: Small ribosomal subunit protein uS14 (101 aa).

It belongs to the universal ribosomal protein uS14 family. As to quaternary structure, part of the 30S ribosomal subunit. Contacts proteins S3 and S10.

Binds 16S rRNA, required for the assembly of 30S particles and may also be responsible for determining the conformation of the 16S rRNA at the A site. The protein is Small ribosomal subunit protein uS14 of Acinetobacter baylyi (strain ATCC 33305 / BD413 / ADP1).